The following is a 752-amino-acid chain: Neuroendocrine convertase 1 (752 aa).

The N-terminal stretch at M1–A27 is a signal peptide. Positions K28 to R110 are excised as a propeptide. The Peptidase S8 domain maps to Q129 to V450. The active-site Charge relay system is the D167. A glycan (N-linked (GlcNAc...) asparagine) is linked at N173. H208 (charge relay system) is an active-site residue. Cystine bridges form between C225-C374 and C317-C347. S382 acts as the Charge relay system in catalysis. An N-linked (GlcNAc...) asparagine glycan is attached at N401. The region spanning N460–Q597 is the P/Homo B domain. C467 and C494 are joined by a disulfide. A disordered region spans residues P631–A662. N-linked (GlcNAc...) asparagine glycosylation occurs at N645.

Belongs to the peptidase S8 family. Furin subfamily. Ca(2+) is required as a cofactor.

The protein resides in the cytoplasmic vesicle. Its subcellular location is the secretory vesicle. It catalyses the reaction Release of protein hormones, neuropeptides and renin from their precursors, generally by hydrolysis of -Lys-Arg-|- bonds.. Functionally, involved in the processing of hormone and other protein precursors at sites comprised of pairs of basic amino acid residues. Substrates include POMC, renin, enkephalin, dynorphin, somatostatin, insulin and AGRP. This Rattus norvegicus (Rat) protein is Neuroendocrine convertase 1 (Pcsk1).